Consider the following 490-residue polypeptide: Pyridine nucleotide-disulfide oxidoreductase domain-containing protein 1 (490 aa).

This sequence belongs to the class-I pyridine nucleotide-disulfide oxidoreductase family. PYROXD1 subfamily. It depends on FAD as a cofactor.

It is found in the nucleus. Its subcellular location is the cytoplasm. The protein resides in the myofibril. It localises to the sarcomere. Probable FAD-dependent oxidoreductase; involved in the cellular oxidative stress response. Required for normal sarcomere structure and muscle fiber integrity. The chain is Pyridine nucleotide-disulfide oxidoreductase domain-containing protein 1 (pyroxd1) from Danio rerio (Zebrafish).